A 145-amino-acid polypeptide reads, in one-letter code: Peptide methionine sulfoxide reductase MsrB (145 aa).

The MsrB domain maps to 6–129; the sequence is KNERLQQLTD…NSAALRFIPV (124 aa). Residue cysteine 118 is the Nucleophile of the active site.

The protein belongs to the MsrB Met sulfoxide reductase family.

The catalysed reaction is L-methionyl-[protein] + [thioredoxin]-disulfide + H2O = L-methionyl-(R)-S-oxide-[protein] + [thioredoxin]-dithiol. This Listeria monocytogenes serotype 4a (strain HCC23) protein is Peptide methionine sulfoxide reductase MsrB.